A 130-amino-acid chain; its full sequence is Large ribosomal subunit protein bL12c (130 aa).

This sequence belongs to the bacterial ribosomal protein bL12 family. Homodimer. Part of the ribosomal stalk of the 50S ribosomal subunit. Forms a multimeric L10(L12)X complex, where L10 forms an elongated spine to which 2 to 4 L12 dimers bind in a sequential fashion. Binds GTP-bound translation factors.

It localises to the plastid. It is found in the chloroplast. Functionally, forms part of the ribosomal stalk which helps the ribosome interact with GTP-bound translation factors. Is thus essential for accurate translation. In Cyanidium caldarium (Red alga), this protein is Large ribosomal subunit protein bL12c.